Reading from the N-terminus, the 386-residue chain is MANEYIFTSESVTEGHPDKMADQISDAILDYIIERDPQARVACETLLSNGFCVIAGELKTAAYAPMQEIAREVVREIGYTDAAYGFDYRSAGVLNGIGEQSPDINVGVDQKGGEIGAGDQGLMFGYACKETKELMPLPISLAHHITRKLAAVRKNGTVPFLRPDGKAQVSVKYVDGKPVAVDTIVVSTQHHETVSLEQVQKAVKEEVIDPVLATYDIDISDITYHINPTGRFVIGGPQGDAGLTGRKIIVDTYGGSCPHGGGAFSGKDPTKVDRSAAYAARYVAKNLVAAGACDKATLQVAYAIGVAKPVSIYVDTHGTAHIDEEKIVSCVESLFDLTPKGIIDSLDLLKPIYKKTAAYGHFGREDMGFSWEKIDKVDEIKAFLGL.

His-16 contributes to the ATP binding site. Asp-18 contacts Mg(2+). K(+) is bound at residue Glu-44. L-methionine is bound by residues Glu-57 and Gln-100. Positions 100-110 (QSPDINVGVDQ) are flexible loop. Residues 164–166 (DGK), 231–232 (RF), Asp-240, 246–247 (RK), Ala-263, and Lys-267 contribute to the ATP site. An L-methionine-binding site is contributed by Asp-240. Lys-271 lines the L-methionine pocket.

It belongs to the AdoMet synthase family. As to quaternary structure, homotetramer; dimer of dimers. It depends on Mg(2+) as a cofactor. K(+) serves as cofactor.

It localises to the cytoplasm. The enzyme catalyses L-methionine + ATP + H2O = S-adenosyl-L-methionine + phosphate + diphosphate. It participates in amino-acid biosynthesis; S-adenosyl-L-methionine biosynthesis; S-adenosyl-L-methionine from L-methionine: step 1/1. Its function is as follows. Catalyzes the formation of S-adenosylmethionine (AdoMet) from methionine and ATP. The overall synthetic reaction is composed of two sequential steps, AdoMet formation and the subsequent tripolyphosphate hydrolysis which occurs prior to release of AdoMet from the enzyme. The chain is S-adenosylmethionine synthase from Sulfurovum sp. (strain NBC37-1).